A 339-amino-acid chain; its full sequence is Glycerol-3-phosphate dehydrogenase [NAD(P)+] (339 aa).

Residues Ser-15, Tyr-16, His-36, and Lys-110 each contribute to the NADPH site. The sn-glycerol 3-phosphate site is built by Lys-110, Gly-139, and Thr-141. Residue Ala-143 participates in NADPH binding. Lys-195, Asp-248, Ser-258, Arg-259, and Asn-260 together coordinate sn-glycerol 3-phosphate. The Proton acceptor role is filled by Lys-195. Arg-259 contacts NADPH. Val-283 and Glu-285 together coordinate NADPH.

This sequence belongs to the NAD-dependent glycerol-3-phosphate dehydrogenase family.

It is found in the cytoplasm. It carries out the reaction sn-glycerol 3-phosphate + NAD(+) = dihydroxyacetone phosphate + NADH + H(+). It catalyses the reaction sn-glycerol 3-phosphate + NADP(+) = dihydroxyacetone phosphate + NADPH + H(+). The protein operates within membrane lipid metabolism; glycerophospholipid metabolism. Catalyzes the reduction of the glycolytic intermediate dihydroxyacetone phosphate (DHAP) to sn-glycerol 3-phosphate (G3P), the key precursor for phospholipid synthesis. This chain is Glycerol-3-phosphate dehydrogenase [NAD(P)+], found in Citrobacter koseri (strain ATCC BAA-895 / CDC 4225-83 / SGSC4696).